We begin with the raw amino-acid sequence, 184 residues long: ATP synthase subunit b, chloroplastic (184 aa).

A helical transmembrane segment spans residues 31–49 (IINSSVVLSVLIYFGKGVL).

The protein belongs to the ATPase B chain family. As to quaternary structure, F-type ATPases have 2 components, F(1) - the catalytic core - and F(0) - the membrane proton channel. F(1) has five subunits: alpha(3), beta(3), gamma(1), delta(1), epsilon(1). F(0) has four main subunits: a(1), b(1), b'(1) and c(10-14). The alpha and beta chains form an alternating ring which encloses part of the gamma chain. F(1) is attached to F(0) by a central stalk formed by the gamma and epsilon chains, while a peripheral stalk is formed by the delta, b and b' chains.

The protein resides in the plastid. The protein localises to the chloroplast thylakoid membrane. F(1)F(0) ATP synthase produces ATP from ADP in the presence of a proton or sodium gradient. F-type ATPases consist of two structural domains, F(1) containing the extramembraneous catalytic core and F(0) containing the membrane proton channel, linked together by a central stalk and a peripheral stalk. During catalysis, ATP synthesis in the catalytic domain of F(1) is coupled via a rotary mechanism of the central stalk subunits to proton translocation. Functionally, component of the F(0) channel, it forms part of the peripheral stalk, linking F(1) to F(0). The protein is ATP synthase subunit b, chloroplastic of Pinus thunbergii (Japanese black pine).